The chain runs to 373 residues: SH3 domain-binding protein 5-like (373 aa).

The tract at residues 1–53 (MEGKEGPSCEVRLPTPGAEREGPIHPELGAFGETASNTIKLSESSNDGKKEEI) is disordered. Residues 34–45 (TASNTIKLSESS) show a composition bias toward polar residues. Coiled coils occupy residues 55-98 (EELD…ESAR) and 170-272 (WQEM…SEEI). Disordered stretches follow at residues 276 to 305 (RTQS…TGPP) and 344 to 373 (TGAV…SVSL). Basic and acidic residues predominate over residues 344–358 (TGAVECGGSRERGGD).

Belongs to the SH3BP5 family.

Functionally, functions as a guanine nucleotide exchange factor (GEF) for rab11a. The chain is SH3 domain-binding protein 5-like (sh3bp5l) from Xenopus tropicalis (Western clawed frog).